The following is a 923-amino-acid chain: Alanine--tRNA ligase (923 aa).

4 residues coordinate Zn(2+): His611, His615, Cys714, and His718. Positions 886 to 903 (VGGGGGGRPNMARGGGTD) are enriched in gly residues. The tract at residues 886-909 (VGGGGGGRPNMARGGGTDPSGMDN) is disordered.

Belongs to the class-II aminoacyl-tRNA synthetase family. Zn(2+) serves as cofactor.

The protein localises to the cytoplasm. It carries out the reaction tRNA(Ala) + L-alanine + ATP = L-alanyl-tRNA(Ala) + AMP + diphosphate. Functionally, catalyzes the attachment of alanine to tRNA(Ala) in a two-step reaction: alanine is first activated by ATP to form Ala-AMP and then transferred to the acceptor end of tRNA(Ala). Also edits incorrectly charged Ser-tRNA(Ala) and Gly-tRNA(Ala) via its editing domain. The sequence is that of Alanine--tRNA ligase from Methanococcoides burtonii (strain DSM 6242 / NBRC 107633 / OCM 468 / ACE-M).